Reading from the N-terminus, the 683-residue chain is MSSGTMKFNGYLRVRIGEAVGLQPTRWSLRHSLFKKGHQLLDPYLTVSVDQVRVGQTSTKQKTNKPTYNEEFCANVTDGGHLELAVFHETPLGYDHFVANCTLQFQELLRTAGTSDTFEGWVDLEPEGKVFVVITLTGSFTEATLQRDRIFKHFTRKRQRAMRRRVHQVNGHKFMATYLRQPTYCSHCREFIWGVFGKQGYQCQVCTCVVHKRCHHLIVTACTCQNNINKVDAKIAEQRFGINIPHKFNVHNYKVPTFCDHCGSLLWGIMRQGLQCKICKMNVHIRCQANVAPNCGVNAVELAKTLAGMGLQPGNISPTSKLISRSTLRRQGKEGSKEGNGIGVNSSSRFGIDNFEFIRVLGKGSFGKVMLARIKETGELYAVKVLKKDVILQDDDVECTMTEKRILSLARNHPFLTQLFCCFQTPDRLFFVMEFVNGGDLMFHIQKSRRFDEARARFYAAEIISALMFLHEKGIIYRDLKLDNVLLDHEGHCKLADFGMCKEGICNGVTTATFCGTPDYIAPEILQEMLYGPAVDWWAMGVLLYEMLCGHAPFEAENEDDLFEAILNDEVVYPTWLHEDATGILKSFMTKNPTMRLGSLTQGGEHEILRHPFFKEIDWAQLNHRQLEPPFRPRIKSREDVSNFDPDFIKEEPVLTPIDEGHLPMINQDEFRNFSYVSPELQL.

The C2 domain occupies 1–118 (MSSGTMKFNG…LRTAGTSDTF (118 aa)). S28 and S32 each carry phosphoserine. 2 Phorbol-ester/DAG-type zinc fingers span residues 171–222 (GHKF…VTAC) and 245–295 (PHKF…APNC). At S317 the chain carries Phosphoserine. Residues 355–614 (FEFIRVLGKG…EHEILRHPFF (260 aa)) form the Protein kinase domain. Residues 361–369 (LGKGSFGKV) and K384 contribute to the ATP site. D479 functions as the Proton acceptor in the catalytic mechanism. Residue T513 is modified to Phosphothreonine; by PDPK1. Positions 615-683 (KEIDWAQLNH…FSYVSPELQL (69 aa)) constitute an AGC-kinase C-terminal domain. At T656 the chain carries Phosphothreonine. S675 is subject to Phosphoserine.

This sequence belongs to the protein kinase superfamily. AGC Ser/Thr protein kinase family. PKC subfamily. Interacts with FYN. Interacts with RALA. Interacts with DGKQ. As to expression, predominantly expressed in lung and skin.

It localises to the cytoplasm. The catalysed reaction is L-seryl-[protein] + ATP = O-phospho-L-seryl-[protein] + ADP + H(+). It catalyses the reaction L-threonyl-[protein] + ATP = O-phospho-L-threonyl-[protein] + ADP + H(+). With respect to regulation, novel PKCs (PRKCD, PRKCE, PRKCH and PRKCQ) are calcium-insensitive, but activated by diacylglycerol (DAG) and phosphatidylserine. Three specific sites; Thr-513 (activation loop of the kinase domain), Thr-656 (turn motif) and Ser-675 (hydrophobic region), need to be phosphorylated for its full activation. Functionally, calcium-independent, phospholipid- and diacylglycerol (DAG)-dependent serine/threonine-protein kinase that is involved in the regulation of cell differentiation in keratinocytes and pre-B cell receptor, mediates regulation of epithelial tight junction integrity and foam cell formation, and is required for glioblastoma proliferation and apoptosis prevention in MCF-7 cells. In keratinocytes, binds and activates the tyrosine kinase FYN, which in turn blocks epidermal growth factor receptor (EGFR) signaling and leads to keratinocyte growth arrest and differentiation. Associates with the cyclin CCNE1-CDK2-CDKN1B complex and inhibits CDK2 kinase activity, leading to RB1 dephosphorylation and thereby G1 arrest in keratinocytes. In association with RALA activates actin depolymerization, which is necessary for keratinocyte differentiation. In the pre-B cell receptor signaling, functions downstream of BLNK by up-regulating IRF4, which in turn activates L chain gene rearrangement. Regulates epithelial tight junctions (TJs) by phosphorylating occludin (OCLN) on threonine residues, which is necessary for the assembly and maintenance of TJs. In association with PLD2 and via TLR4 signaling, is involved in lipopolysaccharide (LPS)-induced RGS2 down-regulation and foam cell formation. Upon PMA stimulation, mediates glioblastoma cell proliferation by activating the mTOR pathway, the PI3K/AKT pathway and the ERK1-dependent phosphorylation of ELK1. Involved in the protection of glioblastoma cells from irradiation-induced apoptosis by preventing caspase-9 activation. In camptothecin-treated MCF-7 cells, regulates NF-kappa-B upstream signaling by activating IKBKB, and confers protection against DNA damage-induced apoptosis. Promotes oncogenic functions of ATF2 in the nucleus while blocking its apoptotic function at mitochondria. Phosphorylates ATF2 which promotes its nuclear retention and transcriptional activity and negatively regulates its mitochondrial localization. The polypeptide is Protein kinase C eta type (Prkch) (Mus musculus (Mouse)).